The sequence spans 649 residues: 1,4-alpha-glucan branching enzyme GlgB (649 aa).

Aspartate 315 functions as the Nucleophile in the catalytic mechanism. The active-site Proton donor is glutamate 366.

It belongs to the glycosyl hydrolase 13 family. GlgB subfamily. Monomer.

It carries out the reaction Transfers a segment of a (1-&gt;4)-alpha-D-glucan chain to a primary hydroxy group in a similar glucan chain.. The protein operates within glycan biosynthesis; glycogen biosynthesis. Catalyzes the formation of the alpha-1,6-glucosidic linkages in glycogen by scission of a 1,4-alpha-linked oligosaccharide from growing alpha-1,4-glucan chains and the subsequent attachment of the oligosaccharide to the alpha-1,6 position. This is 1,4-alpha-glucan branching enzyme GlgB from Ligilactobacillus salivarius (strain UCC118) (Lactobacillus salivarius).